Reading from the N-terminus, the 785-residue chain is Mitochondrial intermediate peptidase (785 aa).

The N-terminal 27 residues, 1–27, are a transit peptide targeting the mitochondrion; it reads MLKAVMPRPWVCSRCVKRQIQSSRGLA. The segment at 26-52 is disordered; the sequence is LATASTQYREPRPVPTDHSAPGAKHDD. Histidine 566 contacts Zn(2+). The active site involves glutamate 567. Residues histidine 570 and histidine 573 each coordinate Zn(2+).

Belongs to the peptidase M3 family. The cofactor is Zn(2+).

It localises to the mitochondrion matrix. It carries out the reaction Release of an N-terminal octapeptide as second stage of processing of some proteins imported into the mitochondrion.. Functionally, cleaves proteins, imported into the mitochondrion, to their mature size. While most mitochondrial precursor proteins are processed to the mature form in one step by mitochondrial processing peptidase (MPP), the sequential cleavage by MIP of an octapeptide after initial processing by MPP is a required step for a subgroup of nuclear-encoded precursor proteins destined for the matrix or the inner membrane. This chain is Mitochondrial intermediate peptidase (oct1), found in Sclerotinia sclerotiorum (strain ATCC 18683 / 1980 / Ss-1) (White mold).